A 228-amino-acid chain; its full sequence is 2,3-bisphosphoglycerate-dependent phosphoglycerate mutase (228 aa).

Substrate contacts are provided by residues 8-15 (RHGQSVWN), 21-22 (TG), R60, 87-90 (ERHY), K98, 114-115 (RR), and 183-184 (GN). Residue H9 is the Tele-phosphohistidine intermediate of the active site. The active-site Proton donor/acceptor is the E87.

This sequence belongs to the phosphoglycerate mutase family. BPG-dependent PGAM subfamily. In terms of assembly, homodimer.

It catalyses the reaction (2R)-2-phosphoglycerate = (2R)-3-phosphoglycerate. It participates in carbohydrate degradation; glycolysis; pyruvate from D-glyceraldehyde 3-phosphate: step 3/5. Functionally, catalyzes the interconversion of 2-phosphoglycerate and 3-phosphoglycerate. In Rhodospirillum centenum (strain ATCC 51521 / SW), this protein is 2,3-bisphosphoglycerate-dependent phosphoglycerate mutase.